Reading from the N-terminus, the 355-residue chain is DNA polymerase IV (355 aa).

In terms of domain architecture, UmuC spans 6–187 (IIHVDMDAFY…LPVGKIHGVG (182 aa)). The Mg(2+) site is built by D10 and D105. E106 is an active-site residue.

This sequence belongs to the DNA polymerase type-Y family. As to quaternary structure, monomer. Requires Mg(2+) as cofactor.

Its subcellular location is the cytoplasm. It catalyses the reaction DNA(n) + a 2'-deoxyribonucleoside 5'-triphosphate = DNA(n+1) + diphosphate. Its function is as follows. Poorly processive, error-prone DNA polymerase involved in untargeted mutagenesis. Copies undamaged DNA at stalled replication forks, which arise in vivo from mismatched or misaligned primer ends. These misaligned primers can be extended by PolIV. Exhibits no 3'-5' exonuclease (proofreading) activity. May be involved in translesional synthesis, in conjunction with the beta clamp from PolIII. The polypeptide is DNA polymerase IV (Alkalilimnicola ehrlichii (strain ATCC BAA-1101 / DSM 17681 / MLHE-1)).